A 52-amino-acid chain; its full sequence is Transcriptional regulator SlrA (52 aa).

The Sin domain occupies 1-38 (MKTHVKKDLDKGWHMLIQEARSIGLGIHDVRQFLESET).

Component of the SlrR/SlrA complex.

Functionally, required specifically for induction of eps and yqxM operons by antagonizing SinR. Regulates SlrR activity. Controls the initiation of biofilm formation. This Bacillus subtilis (strain 168) protein is Transcriptional regulator SlrA (slrA).